The chain runs to 266 residues: 4-hydroxy-tetrahydrodipicolinate reductase (266 aa).

NAD(+)-binding positions include 8–13 (GAAGRM) and glutamate 33. Arginine 34 lines the NADP(+) pocket. Residues 97-99 (GST) and 121-124 (APNM) contribute to the NAD(+) site. The active-site Proton donor/acceptor is histidine 154. Histidine 155 is a (S)-2,3,4,5-tetrahydrodipicolinate binding site. Lysine 158 (proton donor) is an active-site residue. 164-165 (GT) provides a ligand contact to (S)-2,3,4,5-tetrahydrodipicolinate.

Belongs to the DapB family.

The protein resides in the cytoplasm. The enzyme catalyses (S)-2,3,4,5-tetrahydrodipicolinate + NAD(+) + H2O = (2S,4S)-4-hydroxy-2,3,4,5-tetrahydrodipicolinate + NADH + H(+). The catalysed reaction is (S)-2,3,4,5-tetrahydrodipicolinate + NADP(+) + H2O = (2S,4S)-4-hydroxy-2,3,4,5-tetrahydrodipicolinate + NADPH + H(+). It participates in amino-acid biosynthesis; L-lysine biosynthesis via DAP pathway; (S)-tetrahydrodipicolinate from L-aspartate: step 4/4. In terms of biological role, catalyzes the conversion of 4-hydroxy-tetrahydrodipicolinate (HTPA) to tetrahydrodipicolinate. This chain is 4-hydroxy-tetrahydrodipicolinate reductase, found in Geobacter metallireducens (strain ATCC 53774 / DSM 7210 / GS-15).